The sequence spans 454 residues: DNA-binding protein (454 aa).

Residues 1–41 form a disordered region; it reads MSHKKVVAISESSSDEEVPVAPPTAPPKKRQRKAVEEPRGH. Phosphotyrosine; by host is present on Tyr129. Zn(2+) is bound by residues Cys213 and His215. A flexible loop region spans residues 226 to 260; the sequence is VEMDVNSENAQRALKENPEKTKIVSNRWGRNVVQF. Residues Cys268, Cys284, Cys325, Cys327, Cys378, and Cys394 each coordinate Zn(2+). Residues 440 to 454 form a C-terminal arm, DBP binding region; it reads TILPQGQHDDDLVLF.

The protein belongs to the adenoviridae E2A DNA-binding protein family. As to quaternary structure, homomultimerizes on viral ssDNA bound to pTP. Forms a initiation complex with viral polymerase, pTP and hosts NFIA and POU2F1/OCT1. Interacts with host SRCAP.

It is found in the host nucleus. Its function is as follows. Plays a role in the elongation phase of viral strand displacement replication by unwinding the template in an ATP-independent fashion, employing its capacity to form multimers. Also enhances the rate of initiation. Released from template upon second strand synthesis. Assembles in complex with viral pTP, viral pol, host NFIA and host POU2F1/OCT1 on viral origin of replication. Covers the whole ssDNA genome during synthesis. The complementary strand synthesis induces its relese from DNA template. May inhibit cellular transcription mediated by the interaction between host SRCAP and CBP. The sequence is that of DNA-binding protein from Canine adenovirus serotype 1 (strain RI261) (CAdV-1).